We begin with the raw amino-acid sequence, 213 residues long: Large ribosomal subunit protein uL3 (213 aa).

The segment at 122-147 (AIKRHGQSRGPMAHGSRYHRRPGSMG) is disordered.

Belongs to the universal ribosomal protein uL3 family. In terms of assembly, part of the 50S ribosomal subunit. Forms a cluster with proteins L14 and L19.

In terms of biological role, one of the primary rRNA binding proteins, it binds directly near the 3'-end of the 23S rRNA, where it nucleates assembly of the 50S subunit. This chain is Large ribosomal subunit protein uL3, found in Geobacillus stearothermophilus (Bacillus stearothermophilus).